We begin with the raw amino-acid sequence, 337 residues long: Ketol-acid reductoisomerase (NADP(+)) (337 aa).

Residues 1–181 (MKIYYEHDAD…GAARAGVIAT (181 aa)) enclose the KARI N-terminal Rossmann domain. Residues 24-27 (FGSQ), Arg-47, Ser-50, Ser-52, and 82-85 (DEKQ) contribute to the NADP(+) site. The active site involves His-107. Gly-133 serves as a coordination point for NADP(+). Residues 182 to 328 (TFKDETETDL…SRLRAMMPFL (147 aa)) enclose the KARI C-terminal knotted domain. Residues Asp-190, Glu-194, Glu-226, and Glu-230 each contribute to the Mg(2+) site. Ser-251 provides a ligand contact to substrate.

It belongs to the ketol-acid reductoisomerase family. Requires Mg(2+) as cofactor.

The catalysed reaction is (2R)-2,3-dihydroxy-3-methylbutanoate + NADP(+) = (2S)-2-acetolactate + NADPH + H(+). It catalyses the reaction (2R,3R)-2,3-dihydroxy-3-methylpentanoate + NADP(+) = (S)-2-ethyl-2-hydroxy-3-oxobutanoate + NADPH + H(+). It functions in the pathway amino-acid biosynthesis; L-isoleucine biosynthesis; L-isoleucine from 2-oxobutanoate: step 2/4. The protein operates within amino-acid biosynthesis; L-valine biosynthesis; L-valine from pyruvate: step 2/4. Involved in the biosynthesis of branched-chain amino acids (BCAA). Catalyzes an alkyl-migration followed by a ketol-acid reduction of (S)-2-acetolactate (S2AL) to yield (R)-2,3-dihydroxy-isovalerate. In the isomerase reaction, S2AL is rearranged via a Mg-dependent methyl migration to produce 3-hydroxy-3-methyl-2-ketobutyrate (HMKB). In the reductase reaction, this 2-ketoacid undergoes a metal-dependent reduction by NADPH to yield (R)-2,3-dihydroxy-isovalerate. The sequence is that of Ketol-acid reductoisomerase (NADP(+)) from Thermus thermophilus (strain ATCC BAA-163 / DSM 7039 / HB27).